We begin with the raw amino-acid sequence, 90 residues long: UPF0237 protein MMP0657 (90 aa).

The 75-residue stretch at 5-79 folds into the ACT domain; sequence VITVVGVDKP…SEIGVKINVQ (75 aa).

It belongs to the UPF0237 family.

This Methanococcus maripaludis (strain DSM 14266 / JCM 13030 / NBRC 101832 / S2 / LL) protein is UPF0237 protein MMP0657.